Consider the following 839-residue polypeptide: ABC transporter A family member 7 (839 aa).

7 consecutive transmembrane segments (helical) span residues 30 to 50 (GVQIAIPMALVIVLVILKLWI), 238 to 258 (IASLLGGSFFPFALSFVLPLF), 286 to 306 (IMTFIFNFLTYVVIVSVISLI), 321 to 341 (FALFLLLFLWGLSMVSFAFFL), 352 to 372 (SIFGYFFVMVMVNLNSTLSLF), 378 to 398 (VFYYWVPILAFSRGISTLCGL), and 419 to 439 (ILFWLFIDTIVYLTLAVYLDK). An ABC transporter domain is found at 525 to 756 (LIVQGLRKQF…FGDGYSVRID (232 aa)). 559–566 (GPNGAGKT) is an ATP binding site.

It belongs to the ABC transporter superfamily. ABCA family.

The protein localises to the membrane. The chain is ABC transporter A family member 7 (abcA7) from Dictyostelium discoideum (Social amoeba).